The primary structure comprises 222 residues: Ribosomal RNA large subunit methyltransferase E (222 aa).

A compositionally biased stretch (basic and acidic residues) spans 1–13 (MSRSDKNPHERLK). Positions 1–22 (MSRSDKNPHERLKTAKKRTASS) are disordered. The S-adenosyl-L-methionine site is built by Gly-75, Trp-77, Asp-94, Asp-110, and Asp-134. Lys-174 serves as the catalytic Proton acceptor.

Belongs to the class I-like SAM-binding methyltransferase superfamily. RNA methyltransferase RlmE family.

The protein localises to the cytoplasm. The enzyme catalyses uridine(2552) in 23S rRNA + S-adenosyl-L-methionine = 2'-O-methyluridine(2552) in 23S rRNA + S-adenosyl-L-homocysteine + H(+). Specifically methylates the uridine in position 2552 of 23S rRNA at the 2'-O position of the ribose in the fully assembled 50S ribosomal subunit. The chain is Ribosomal RNA large subunit methyltransferase E from Novosphingobium aromaticivorans (strain ATCC 700278 / DSM 12444 / CCUG 56034 / CIP 105152 / NBRC 16084 / F199).